A 331-amino-acid chain; its full sequence is Olfactory receptor 6K3 (331 aa).

Residues 1-41 lie on the Extracellular side of the membrane; it reads MCWTMPSPFTGSSTRNMESGNQSTVTEFIFTGFPQLQDGSL. Asn-21 carries an N-linked (GlcNAc...) asparagine glycan. Residues 42-62 traverse the membrane as a helical segment; it reads LYFFPLLFIYTFIIIDNLLIF. The Cytoplasmic segment spans residues 63 to 70; sequence SAVRLDTH. Residues 71–91 traverse the membrane as a helical segment; sequence LHNPMYNFISIFSFLEIWYTT. Residues 92-115 are Extracellular-facing; that stretch reads ATIPKMLSNLISEKKAISMTGCIL. Cys-113 and Cys-205 form a disulfide bridge. A helical membrane pass occupies residues 116 to 136; the sequence is QMYFFHSLENSEGILLTTMAI. The Cytoplasmic segment spans residues 137-155; the sequence is DRYVAICNPLRYQMIMTPR. Residues 156-176 traverse the membrane as a helical segment; the sequence is LCAQLSAGSCLFGFLILLPEI. The Extracellular portion of the chain corresponds to 177-212; that stretch reads VMISTLPFCGPNQIHQIFCDLVPVLSLACTDTSMIL. A helical transmembrane segment spans residues 213–232; the sequence is IEDVIHAVTIIITFLIIALS. Over 233–252 the chain is Cytoplasmic; the sequence is YVRIVTVILRIPSSEGRQKA. A helical transmembrane segment spans residues 253 to 273; that stretch reads FSTCAGHLMVFPIFFGSVSLM. The Extracellular segment spans residues 274-286; that stretch reads YLRFSDTYPPVLD. Residues 287-307 traverse the membrane as a helical segment; that stretch reads TAIALMFTVLAPFFNPIIYSL. The Cytoplasmic segment spans residues 308–331; sequence RNKDMNNAIKKLFCLQKVLNKPGG.

Belongs to the G-protein coupled receptor 1 family.

Its subcellular location is the cell membrane. Functionally, odorant receptor. This Homo sapiens (Human) protein is Olfactory receptor 6K3 (OR6K3).